A 293-amino-acid chain; its full sequence is Small ribosomal subunit protein uS2m (293 aa).

Over residues 21–38 (GRAAQRGRTLGSAAAAAA) the composition is skewed to low complexity. Disordered stretches follow at residues 21–49 (GRAAQRGRTLGSAAAAAAREPERDSDRSA) and 263–293 (QGAPGPHPANPAAPGAPSPGAQAQLGMGHSP). Basic and acidic residues predominate over residues 39–49 (REPERDSDRSA). Residues 267-279 (GPHPANPAAPGAP) are compositionally biased toward pro residues.

It belongs to the universal ribosomal protein uS2 family. In terms of assembly, component of the mitochondrial ribosome small subunit (28S) which comprises a 12S rRNA and about 30 distinct proteins.

The protein resides in the mitochondrion. In terms of biological role, required for mitoribosome formation and stability, and mitochondrial translation. This is Small ribosomal subunit protein uS2m (MRPS2) from Bos taurus (Bovine).